The chain runs to 349 residues: Succinylglutamate desuccinylase (349 aa).

Positions 70, 73, and 166 each coordinate Zn(2+). E229 is an active-site residue.

Belongs to the AspA/AstE family. Succinylglutamate desuccinylase subfamily. It depends on Zn(2+) as a cofactor.

It carries out the reaction N-succinyl-L-glutamate + H2O = L-glutamate + succinate. It participates in amino-acid degradation; L-arginine degradation via AST pathway; L-glutamate and succinate from L-arginine: step 5/5. Its function is as follows. Transforms N(2)-succinylglutamate into succinate and glutamate. This Burkholderia mallei (strain ATCC 23344) protein is Succinylglutamate desuccinylase.